A 504-amino-acid chain; its full sequence is Procardosin-A (504 aa).

The N-terminal stretch at 1–24 (MGTSIKANVLALFLFYLLSPTVFS) is a signal peptide. A propeptide spanning residues 25–68 (VSDDGLIRIGLKKRKVDRIDQLRGRRALMEGNARKDFGFRGTVR) is cleaved from the precursor. The Peptidase A1 domain occupies 85 to 501 (YFGEIGIGTP…DYGNLLVGFA (417 aa)). Asp-103 is an active-site residue. A disulfide bridge links Cys-116 with Cys-122. Residue Asn-139 is glycosylated (N-linked (GlcNAc...) asparagine). Residues 246–248 (RGD) carry the RGD motif motif. A disulfide bond links Cys-277 and Cys-281. Asp-286 is an active-site residue. A propeptide spans 310-414 (GVMNQQCKTV…YANELCEHLS (105 aa)) (plant-specific insert). The Saposin B-type domain occupies 311–416 (VMNQQCKTVV…NELCEHLSTS (106 aa)). Intrachain disulfides connect Cys-316-Cys-410, Cys-341-Cys-382, Cys-347-Cys-379, and Cys-424-Cys-461. The N-linked (GlcNAc...) asparagine glycan is linked to Asn-432. Residues 455-457 (KGE) carry the KGE motif motif.

The protein belongs to the peptidase A1 family. Heterodimer of a light chain and a heavy chain. An intermediate form (35 kDa and 30 kDa subunits) is produced first, and undergoes proteolytic processing to remove the internal plant-specific insert (PSI) and the propeptide. There is some heterogeniety at the cleavage site. Interacts (via RGD or KGE motifs) with PLD1 (via C2 domain). N-glycosylated. Glycans found at Asn-139 include approximately 6% oligomannose, 82% oligosaccharides of the plant modified type with proximal fucose but without xylose and 6% oligosaccharides of the plant modified type with proximal fucose and xylose. Glycans found at Asn-432 include 14% oligosaccharides of the plant modified type with proximal fucose but without xylose and 86% oligosaccharides of the plant modified type with proximal fucose and xylose. Detected only in pistils, not in seeds, roots, midribs, bracts, stamens, pollen, vascular or supporting tissues. Detected in seeds. High amounts are detected in the broad outer region of the upper portion of the stigma, towards the lower portion of the stigma it accumulates at the periphery. Within the stigma, expressed mainly in the epidermic papillae, lower levels are found in the cortical parenchyma. Present mainly in epidermal cells within the stye (at protein level). Expressed in young flower buds, and at lower levels in seeds, pollen and bracteas, but not in roots or leaves.

The protein resides in the microsome membrane. It localises to the protein storage vacuole. Its subcellular location is the secreted. It is found in the cell wall. The protein localises to the extracellular space. The protein resides in the extracellular matrix. Its activity is regulated as follows. Inhibited by the specific aspartic proteinase inhibitors diazoacetyl-noleucine methyl ester and pepstatin. Aspartic proteinase with a high preference for bonds between hydrophobic residues. Cleaves alpha-lactalbumin but not beta-lactoglobulin. The chain is Procardosin-A from Cynara cardunculus (Cardoon).